The primary structure comprises 242 residues: ESVARGTAPGELHCFPGAGPVRHTLNPMVTGTSVLGVKFDGGVIIAADMLGSYGSLARFRNISRIMKVNENTILGASGDYADYQYLKQVIDQMVIDEELVGDGHNYSPKAIHSWLTRVMYNRRSKMNPLWNTVVIGGFYNGESFLGYVDKLGVAYEAPTIATGFGAYLAQPLLREVTENKATLSKEEARQLVDRCMKVLYYRDARSYNRFEITTVTESGVEVEGPLSSETNWEIAHLISGFE.

A propeptide spanning residues E1–H23 is cleaved from the precursor. The Nucleophile role is filled by T24.

It belongs to the peptidase T1B family. In terms of assembly, the 26S proteasome consists of a 20S proteasome core and two 19S regulatory subunits. The 20S proteasome core is composed of 28 subunits that are arranged in four stacked rings, resulting in a barrel-shaped structure. The two end rings are each formed by seven alpha subunits, and the two central rings are each formed by seven beta subunits. The catalytic chamber with the active sites is on the inside of the barrel.

Its subcellular location is the cytoplasm. The protein resides in the nucleus. In terms of biological role, non-catalytic component of the proteasome, a multicatalytic proteinase complex which is characterized by its ability to cleave peptides with Arg, Phe, Tyr, Leu, and Glu adjacent to the leaving group at neutral or slightly basic pH. The proteasome has an ATP-dependent proteolytic activity. This Xenopus laevis (African clawed frog) protein is Proteasome subunit beta type-4 (psmb4).